Reading from the N-terminus, the 357-residue chain is 3-dehydroquinate synthase (357 aa).

Residues 126–127 (TT), lysine 139, and lysine 148 each bind NAD(+). Zn(2+) is bound by residues glutamate 181, histidine 244, and histidine 261.

Belongs to the sugar phosphate cyclases superfamily. Dehydroquinate synthase family. It depends on Co(2+) as a cofactor. The cofactor is Zn(2+). Requires NAD(+) as cofactor.

It localises to the cytoplasm. It carries out the reaction 7-phospho-2-dehydro-3-deoxy-D-arabino-heptonate = 3-dehydroquinate + phosphate. It functions in the pathway metabolic intermediate biosynthesis; chorismate biosynthesis; chorismate from D-erythrose 4-phosphate and phosphoenolpyruvate: step 2/7. In terms of biological role, catalyzes the conversion of 3-deoxy-D-arabino-heptulosonate 7-phosphate (DAHP) to dehydroquinate (DHQ). This chain is 3-dehydroquinate synthase, found in Solibacter usitatus (strain Ellin6076).